The primary structure comprises 420 residues: UDP-N-acetylglucosamine 1-carboxyvinyltransferase (420 aa).

22–23 serves as a coordination point for phosphoenolpyruvate; the sequence is KN. Residue R92 participates in UDP-N-acetyl-alpha-D-glucosamine binding. Residue C116 is the Proton donor of the active site. C116 is subject to 2-(S-cysteinyl)pyruvic acid O-phosphothioketal. UDP-N-acetyl-alpha-D-glucosamine contacts are provided by residues 121-125, D304, and I326; that span reads RPVDQ.

The protein belongs to the EPSP synthase family. MurA subfamily.

The protein resides in the cytoplasm. The enzyme catalyses phosphoenolpyruvate + UDP-N-acetyl-alpha-D-glucosamine = UDP-N-acetyl-3-O-(1-carboxyvinyl)-alpha-D-glucosamine + phosphate. Its pathway is cell wall biogenesis; peptidoglycan biosynthesis. Its function is as follows. Cell wall formation. Adds enolpyruvyl to UDP-N-acetylglucosamine. This is UDP-N-acetylglucosamine 1-carboxyvinyltransferase from Paraburkholderia phytofirmans (strain DSM 17436 / LMG 22146 / PsJN) (Burkholderia phytofirmans).